Reading from the N-terminus, the 415-residue chain is rRNA methyltransferase 3, mitochondrial (415 aa).

A mitochondrion-targeting transit peptide spans methionine 1 to arginine 47. The interval proline 41 to valine 73 is disordered. A compositionally biased stretch (basic and acidic residues) spans glutamate 44 to arginine 56. A compositionally biased stretch (polar residues) spans glutamine 59–valine 73. S-adenosyl-L-methionine contacts are provided by glycine 357, isoleucine 381, and leucine 390.

The protein belongs to the class IV-like SAM-binding methyltransferase superfamily. RNA methyltransferase TrmH family.

The protein resides in the mitochondrion. It catalyses the reaction a uridine in rRNA + S-adenosyl-L-methionine = a 2'-O-methyluridine in rRNA + S-adenosyl-L-homocysteine + H(+). In terms of biological role, S-adenosyl-L-methionine-dependent 2'-O-ribose methyltransferase that catalyzes the formation of 2'-O-methylguanosine at position 1370 (Gm1370) in the mitochondrial large subunit ribosomal RNA (mtLSU rRNA), a conserved modification in the peptidyl transferase domain of the mtLSU rRNA. Also required for formation of 2'-O-methyluridine at position 1369 (Um1369) mediated by MRM2. This chain is rRNA methyltransferase 3, mitochondrial, found in Xenopus tropicalis (Western clawed frog).